Consider the following 429-residue polypeptide: Type II methyltransferase M.AgeI (429 aa).

In terms of domain architecture, SAM-dependent MTase C5-type spans 1–429 (MKTIDLFCGA…MAETIKVAIS (429 aa)). Residue cysteine 80 is part of the active site.

Belongs to the class I-like SAM-binding methyltransferase superfamily. C5-methyltransferase family.

It catalyses the reaction a 2'-deoxycytidine in DNA + S-adenosyl-L-methionine = a 5-methyl-2'-deoxycytidine in DNA + S-adenosyl-L-homocysteine + H(+). In terms of biological role, a methylase, recognizes the double-stranded sequence 5'-ACCGGT-3', methylates C-3 on both strands, and protects the DNA from cleavage by the AgeI endonuclease. This is Type II methyltransferase M.AgeI (ageIM) from Thalassovita gelatinovora (Thalassobius gelatinovorus).